We begin with the raw amino-acid sequence, 284 residues long: Tropomyosin beta chain (284 aa).

An N-acetylmethionine modification is found at methionine 1. The interval 1 to 78 is disordered; sequence MDAIKKKMQM…EKLEQAEKKA (78 aa). The stretch at 1–284 forms a coiled coil; it reads MDAIKKKMQM…DNALNDITSL (284 aa). Composition is skewed to basic and acidic residues over residues 12-40 and 51-78; these read KLDKENAIDRAEQAEADKKQAEDRCKQLE and KGTEDEVEKYSESVKDAQEKLEQAEKKA. Position 53 is a phosphothreonine (threonine 53). Serine 61 carries the phosphoserine; by PIK3CG modification. Threonine 79 carries the post-translational modification Phosphothreonine. Serine 87 is modified (phosphoserine). At threonine 108 the chain carries Phosphothreonine. The interval 117–136 is disordered; it reads EKAADESERGMKVIENRAMK. A phosphoserine mark is found at serine 158, serine 206, and serine 215. Threonine 252 bears the Phosphothreonine mark. The residue at position 261 (tyrosine 261) is a Phosphotyrosine. Serine 271 is subject to Phosphoserine. At threonine 282 the chain carries Phosphothreonine. The residue at position 283 (serine 283) is a Phosphoserine.

It belongs to the tropomyosin family. As to quaternary structure, homodimer. Heterodimer of an alpha (TPM1, TPM3 or TPM4) and a beta (TPM2) chain. Phosphorylated on Ser-61 by PIK3CG. Phosphorylation on Ser-61 is required for ADRB2 internalization.

The protein localises to the cytoplasm. The protein resides in the cytoskeleton. Its function is as follows. Binds to actin filaments in muscle and non-muscle cells. Plays a central role, in association with the troponin complex, in the calcium dependent regulation of vertebrate striated muscle contraction. Smooth muscle contraction is regulated by interaction with caldesmon. In non-muscle cells is implicated in stabilizing cytoskeleton actin filaments. The non-muscle isoform may have a role in agonist-mediated receptor internalization. This chain is Tropomyosin beta chain (Tpm2), found in Mus musculus (Mouse).